The primary structure comprises 616 residues: Probable galacturonosyltransferase 4 (616 aa).

The Cytoplasmic portion of the chain corresponds to 1–6 (MMVKLR). The chain crosses the membrane as a helical; Signal-anchor for type II membrane protein span at residues 7-29 (NLVLFFMLLTVVAHILLYTDPAA). Residues 30–616 (SFKTPFSKRD…VYLRECNINP (587 aa)) are Lumenal-facing. The disordered stretch occupies residues 132–152 (QTSEKVDEQPEPNAFGAKKDT). N-linked (GlcNAc...) asparagine glycosylation is found at asparagine 291, asparagine 326, asparagine 378, asparagine 481, and asparagine 514.

It belongs to the glycosyltransferase 8 family. Expressed in roots, inflorescences, siliques, leaves and stems.

It is found in the golgi apparatus membrane. The protein operates within glycan metabolism; pectin biosynthesis. In terms of biological role, may be involved in pectin and/or xylans biosynthesis in cell walls. This is Probable galacturonosyltransferase 4 (GAUT4) from Arabidopsis thaliana (Mouse-ear cress).